We begin with the raw amino-acid sequence, 433 residues long: Histone deacetylase RPD3 (433 aa).

The histone deacetylase stretch occupies residues 19–331 (RRVAYFYDAD…WCFETGLLNN (313 aa)). Histidine 151 is an active-site residue. The short motif at 320-340 (RTWCFETGLLNNVVLDKDLPY) is the ESA1-RPD3 motif element. A disordered region spans residues 388 to 433 (SVQLNHTPRDAEDLGDVEEDSAEAKDTKGGSQYARDLHVEHDNEFY). The residue at position 394 (threonine 394) is a Phosphothreonine. Serine 408 is modified (phosphoserine). Residues 422–433 (RDLHVEHDNEFY) show a composition bias toward basic and acidic residues.

This sequence belongs to the histone deacetylase family. HD type 1 subfamily. In terms of assembly, component of the RPD3C(L) complex composed of at least ASH1, CTI6, DEP1, PHO23, RPD3, RXT2, RXT3, SAP30, SDS3, SIN3, UME1 and UME6. Component of the RPD3C(S) complex composed of at least EAF3, RCO1, RPD3, SIN3, and UME1. Interacts with cyclophilins CPR1, CPR6 and CPR7, with the kinase HOG1, and with ESS1, CYC8 and HAC1.

Its subcellular location is the cytoplasm. The protein localises to the nucleus. The enzyme catalyses N(6)-acetyl-L-lysyl-[histone] + H2O = L-lysyl-[histone] + acetate. Catalytic component of the RPD3 histone deacetylase (HDAC) complexes RPD3C(L) and RPD3C(S) responsible for the deacetylation of lysine residues on the N-terminal part of the core histones (H2A, H2B, H3 and H4). Histone deacetylation plays an important role in transcriptional regulation, cell cycle progression, DNA damage response, osmotic stress response and developmental events. Is involved in rDNA and telomere silencing and in double strand breaks repair. Required for both full transcription repression and activation of many genes including cell type-specific genes (STE6, TY2 and HO), cell differentiation-specific genes (SPO13), genes that respond to external signals (PHO5) and TRK2. The RPD3 complexes regulate also chromosomal replication timing. The protein is Histone deacetylase RPD3 (RPD3) of Saccharomyces cerevisiae (strain ATCC 204508 / S288c) (Baker's yeast).